Reading from the N-terminus, the 508-residue chain is MDNCDQDASFRLSHIKEEVKPDISQLNDSNNSSFSPKAESPVPFMQAMSMVHVLPGSNSASSNNNSAGDAQMAQAPNSAGGSAAAAVQQQYPPNHPLSGSKHLCSICGDRASGKHYGVYSCEGCKGFFKRTVRKDLTYACRENRNCIIDKRQRNRCQYCRYQKCLTCGMKREAVQEERQRGARNAAGRLSASGGGSSGPGSVGGSSSQGGGGGGGVSGGMGSGNGSDDFMTNSVSRDFSIERIIEAEQRAETQCGDRALTFLRVGPYSTVQPDYKGAVSALCQVVNKQLFQMVEYARMMPHFAQVPLDDQVILLKAAWIELLIANVAWCSIVSLDDGGAGGGGGGLGHDGSFERRSPGLQPQQLFLNQSFSYHRNSAIKAGVSAIFDRILSELSVKMKRLNLDRRELSCLKAIILYNPDIRGIKSRAEIEMCREKVYACLDEHCRLEHPGDDGRFAQLLLRLPALRSISLKCQDHLFLFRITSDRPLEELFLEQLEAPPPPGLAMKLE.

The tract at residues 1 to 103 (MDNCDQDASF…NHPLSGSKHL (103 aa)) is modulating. Disordered regions lie at residues 21–40 (PDIS…KAES) and 55–92 (PGSN…QQYP). A compositionally biased stretch (polar residues) spans 24 to 35 (SQLNDSNNSSFS). Serine 35 bears the Phosphoserine mark. Low complexity predominate over residues 57–90 (SNSASSNNNSAGDAQMAQAPNSAGGSAAAAVQQQ). 2 consecutive NR C4-type zinc fingers follow at residues 104 to 124 (CSIC…CEGC) and 140 to 164 (CREN…YQKC). A DNA-binding region (nuclear receptor) is located at residues 104–169 (CSICGDRASG…RYQKCLTCGM (66 aa)). Positions 170–223 (KREAVQEERQRGARNAAGRLSASGGGSSGPGSVGGSSSQGGGGGGGVSGGMGSG) are hinge. The interval 178-228 (RQRGARNAAGRLSASGGGSSGPGSVGGSSSQGGGGGGGVSGGMGSGNGSDD) is disordered. Gly residues predominate over residues 192–224 (SGGGSSGPGSVGGSSSQGGGGGGGVSGGMGSGN). The 260-residue stretch at 239-498 (SIERIIEAEQ…ELFLEQLEAP (260 aa)) folds into the NR LBD domain.

The protein belongs to the nuclear hormone receptor family. NR2 subfamily. Heterodimer of USP and ECR. Only the heterodimer is capable of high-affinity binding to ecdysone.

It localises to the nucleus. Receptor for ecdysone. May be an important modulator of insect metamorphosis. Plays an important part in embryonic and post-embryonic development. Binds to ecdysone response elements (ECRES) such as in the promoter region of s15 chorion gene. The polypeptide is Protein ultraspiracle (usp) (Drosophila melanogaster (Fruit fly)).